The following is a 775-amino-acid chain: Chondroitin sulfate synthase 2 (775 aa).

Over 1–15 (MRASLLLSVLRPAGP) the chain is Cytoplasmic. A helical; Signal-anchor for type II membrane protein membrane pass occupies residues 16–34 (VAVGISLGFTLSLLSVTWV). Over 35 to 775 (EEPCGPGPPQ…LFEQEQGNST (741 aa)) the chain is Lumenal. The interval 37–100 (PCGPGPPQPG…YHPAQPGQAA (64 aa)) is disordered. A compositionally biased stretch (polar residues) spans 54-66 (GNTNAARRPNSVQ). Residues Asn-138 and Asn-361 are each glycosylated (N-linked (GlcNAc...) asparagine). Residue Asp-617 participates in a divalent metal cation binding.

It belongs to the chondroitin N-acetylgalactosaminyltransferase family. In terms of assembly, interacts with PRKN. The cofactor is Mn(2+). Requires Co(2+) as cofactor. Ubiquitous. Highly expressed in pancreas, ovary, brain, heart, skeletal muscle, colon, kidney, liver, stomach, spleen and placenta. In terms of tissue distribution, expressed in brain, spleen, ovary, testis, lung and peripheral mononuclear cells. As to expression, also ubiquitous.

The protein localises to the golgi apparatus. Its subcellular location is the golgi stack membrane. It is found in the cytoplasm. It localises to the cytosol. The protein resides in the mitochondrion. The protein localises to the mitochondrion matrix. It carries out the reaction 3-O-(beta-D-GlcA-(1-&gt;3)-beta-D-GalNAc-(1-&gt;4)-beta-D-GlcA-(1-&gt;3)-beta-D-Gal-(1-&gt;3)-beta-D-Gal-(1-&gt;4)-beta-D-Xyl)-L-seryl-[protein] + UDP-N-acetyl-alpha-D-galactosamine = 3-O-(beta-D-GalNAc-(1-&gt;4)-beta-D-GlcA-(1-&gt;3)-beta-D-GalNAc-(1-&gt;4)-beta-D-GlcA-(1-&gt;3)-beta-D-Gal-(1-&gt;3)-beta-D-Gal-(1-&gt;4)-beta-D-Xyl)-L-seryl-[protein] + UDP + H(+). It catalyses the reaction 3-O-{beta-D-GlcA-(1-&gt;3)-[beta-D-GalNAc-(1-&gt;4)-beta-D-GlcA-(1-&gt;3)](n)-beta-D-GalNAc-(1-&gt;4)-beta-D-GlcA-(1-&gt;3)-beta-D-Gal-(1-&gt;3)-beta-D-Gal-(1-&gt;4)-beta-D-Xyl}-L-seryl-[protein] + UDP-N-acetyl-alpha-D-galactosamine = 3-O-{[beta-D-GalNAc-(1-&gt;4)-beta-D-GlcA-(1-&gt;3)](n+1)-beta-D-GalNAc-(1-&gt;4)-beta-D-GlcA-(1-&gt;3)-beta-D-Gal-(1-&gt;3)-beta-D-Gal-(1-&gt;4)-beta-D-Xyl}-L-seryl-[protein] + UDP + H(+). The catalysed reaction is 3-O-(beta-D-GalNAc-(1-&gt;4)-beta-D-GlcA-(1-&gt;3)-beta-D-Gal-(1-&gt;3)-beta-D-Gal-(1-&gt;4)-beta-D-Xyl)-L-seryl-[protein] + UDP-alpha-D-glucuronate = 3-O-(beta-D-GlcA-(1-&gt;3)-beta-D-GalNAc-(1-&gt;4)-beta-D-GlcA-(1-&gt;3)-beta-D-Gal-(1-&gt;3)-beta-D-Gal-(1-&gt;4)-beta-D-Xyl)-L-seryl-[protein] + UDP + H(+). The enzyme catalyses 3-O-{[beta-D-GalNAc-(1-&gt;4)-beta-D-GlcA-(1-&gt;3)](n)-beta-D-GalNAc-(1-&gt;4)-beta-D-GlcA-(1-&gt;3)-beta-D-Gal-(1-&gt;3)-beta-D-Gal-(1-&gt;4)-beta-D-Xyl}-L-seryl-[protein] + UDP-alpha-D-glucuronate = 3-O-{beta-D-GlcA-(1-&gt;3)-[beta-D-GalNAc-(1-&gt;4)-beta-D-GlcA-(1-&gt;3)](n)-beta-D-GalNAc-(1-&gt;4)-beta-D-GlcA-(1-&gt;3)-beta-D-Gal-(1-&gt;3)-beta-D-Gal-(1-&gt;4)-beta-D-Xyl}-L-seryl-[protein] + UDP + H(+). Its function is as follows. Has both beta-1,3-glucuronic acid and beta-1,4-N-acetylgalactosamine transferase activity. Transfers glucuronic acid (GlcUA) from UDP-GlcUA and N-acetylgalactosamine (GalNAc) from UDP-GalNAc to the non-reducing end of the elongating chondroitin polymer. Seems to act as a specific activating factor for CHSY1 in chondroitin polymerization. In terms of biological role, may facilitate PRKN transport into the mitochondria. In collaboration with PRKN, may enhance cell viability and protect cells from oxidative stress. The sequence is that of Chondroitin sulfate synthase 2 from Homo sapiens (Human).